Consider the following 227-residue polypeptide: 2,3-bisphosphoglycerate-dependent phosphoglycerate mutase (227 aa).

Residues 7-14 (RHGFSEWN), 20-21 (TG), Arg-59, 86-89 (ERHY), Lys-97, 113-114 (RR), and 182-183 (GN) each bind substrate. The active-site Tele-phosphohistidine intermediate is the His-8. Glu-86 acts as the Proton donor/acceptor in catalysis.

Belongs to the phosphoglycerate mutase family. BPG-dependent PGAM subfamily. As to quaternary structure, homodimer.

It catalyses the reaction (2R)-2-phosphoglycerate = (2R)-3-phosphoglycerate. The protein operates within carbohydrate degradation; glycolysis; pyruvate from D-glyceraldehyde 3-phosphate: step 3/5. Functionally, catalyzes the interconversion of 2-phosphoglycerate and 3-phosphoglycerate. The protein is 2,3-bisphosphoglycerate-dependent phosphoglycerate mutase of Glaesserella parasuis serovar 5 (strain SH0165) (Haemophilus parasuis).